Here is an 873-residue protein sequence, read N- to C-terminus: Inner centromere protein A (873 aa).

7 disordered regions span residues 50-124 (AEPE…KRMT), 237-270 (PANEQQLNLSNQSATPTGSKSDRRSVRRSLVVRK), 282-452 (FSLA…PPPH), 484-535 (KRNT…KVRR), 566-649 (QIDE…LAEQ), 683-736 (LERA…EQAA), and 781-800 (DLNSDDSTDDESQPRKPIPA). Residues 60-69 (SQKRRRKKRT) show a composition bias toward basic residues. Residues 87 to 105 (RQSNASWSSSVRRLSVRNQ) show a composition bias toward low complexity. Polar residues predominate over residues 239–254 (NEQQLNLSNQSATPTG). A compositionally biased stretch (basic residues) spans 261–270 (SVRRSLVVRK). Residues 286 to 297 (SKRESMTREAVR) are compositionally biased toward basic and acidic residues. Residues 314-325 (SSTSSQRSYQSS) are compositionally biased toward low complexity. The span at 437-452 (PSPPCPPSKIVRPPPH) shows a compositional bias: pro residues. 4 stretches are compositionally biased toward basic and acidic residues: residues 491–535 (TDPK…KVRR), 566–584 (QIDEKSEKVREDRMAEEKA), 591–649 (KKQE…LAEQ), and 683–733 (LERA…KAKE). The SAH stretch occupies residues 494–707 (KTEEKERQRL…EERKKREQQE (214 aa)). The IN box stretch occupies residues 782–856 (LNSDDSTDDE…RTSSAVWHSP (75 aa)). Residues serine 849 and serine 850 each carry the phosphoserine modification.

This sequence belongs to the INCENP family. Component of the CPC composed of survivin/birc5, incenp, cdca8/borealin and/or cdca9/dasra-A, and aurkb/aurora-B. Interacts (via C-terminus) with aurkb (via N-terminus and kinase domain). Interacts (via N-terminus) with birc5.1, birc5.2, cdca8 and cdca9. Interacts with mtus1.

Its subcellular location is the nucleus. The protein localises to the chromosome. It localises to the centromere. It is found in the cytoplasm. The protein resides in the cytoskeleton. Its subcellular location is the spindle. The protein localises to the midbody. It localises to the kinetochore. Functionally, component of the chromosomal passenger complex (CPC), a complex that acts as a key regulator of mitosis. The CPC complex has essential functions at the centromere in ensuring correct chromosome alignment and segregation and is required for chromatin-induced microtubule stabilization and spindle assembly. Acts as a scaffold regulating CPC localization and activity. The C-terminus associates with aurkb/aurora-B, the N-terminus associated with cdca8/borealin and/or cdca9/dasra-A tethers the CPC to the inner centromere, and the microtubule binding activity within the central SAH domain directs aurkb/aurora-B toward substrates near microtubules. Activates aurkb. This Xenopus laevis (African clawed frog) protein is Inner centromere protein A (incenp-a).